The sequence spans 477 residues: Ubiquinone biosynthesis monooxygenase COQ6, mitochondrial (477 aa).

A mitochondrion-targeting transit peptide spans 1 to 25 (MLGVLRIQGALASAGQARLLSVRLL).

The protein belongs to the UbiH/COQ6 family. As to quaternary structure, component of a multi-subunit COQ enzyme complex. It depends on FAD as a cofactor.

It is found in the mitochondrion inner membrane. It carries out the reaction a 4-hydroxy-3-(all-trans-polyprenyl)benzoate + 2 reduced [2Fe-2S]-[ferredoxin] + O2 + 2 H(+) = a 3,4-dihydroxy-5-(all-trans-polyprenyl)benzoate + 2 oxidized [2Fe-2S]-[ferredoxin] + H2O. It catalyses the reaction a 2-methoxy-6-(all-trans-polyprenyl)phenol + 2 reduced [2Fe-2S]-[ferredoxin] + O2 + 2 H(+) = a 2-methoxy-6-(all-trans-polyprenyl)benzene-1,4-diol + 2 oxidized [2Fe-2S]-[ferredoxin] + H2O. The protein operates within cofactor biosynthesis; ubiquinone biosynthesis. Functionally, FAD-dependent monooxygenase required for two non-consecutive steps during ubiquinone biosynthesis. Required for the C5-ring hydroxylation during ubiquinone biosynthesis by catalyzing the hydroxylation of 4-hydroxy-3-(all-trans-polyprenyl)benzoic acid to 3,4-dihydroxy-5-(all-trans-polyprenyl)benzoic acid. Also acts downstream of coq4, for the C1-hydroxylation during ubiquinone biosynthesis by catalyzing the hydroxylation of 2-methoxy-6-(all-trans-polyprenyl)phenol to 2-methoxy-6-(all-trans-polyprenyl)benzene-1,4-diol. The electrons required for the hydroxylation reaction are funneled indirectly to Coq6 from NADPH via a ferredoxin/ferredoxin reductase system. The chain is Ubiquinone biosynthesis monooxygenase COQ6, mitochondrial from Drosophila melanogaster (Fruit fly).